The following is a 337-amino-acid chain: Transcription initiation factor IIB (337 aa).

Residues 37 to 68 (YTVECPECGSRALVRDYERAELVCSECGLVID) form a TFIIB-type zinc finger. Zn(2+) is bound by residues cysteine 41, cysteine 44, cysteine 60, and cysteine 63. 2 repeat units span residues 154–237 (SELD…SREL) and 248–329 (DYIP…ELAE).

Belongs to the TFIIB family.

Stabilizes TBP binding to an archaeal box-A promoter. Also responsible for recruiting RNA polymerase II to the pre-initiation complex (DNA-TBP-TFIIB). In Methanothrix thermoacetophila (strain DSM 6194 / JCM 14653 / NBRC 101360 / PT) (Methanosaeta thermophila), this protein is Transcription initiation factor IIB.